The following is a 99-amino-acid chain: U8-agatoxin-Ao1a (99 aa).

The signal sequence occupies residues 1 to 19 (MKSLLFVTIAVYFVAQAVT). Positions 20–45 (ANLLSNFLGSSLIDDDKGNMHKLYKR) are excised as a propeptide.

This sequence belongs to the neurotoxin 02 (plectoxin) family. Contains 5 disulfide bonds. In terms of tissue distribution, expressed by the venom gland.

The protein resides in the secreted. This Agelena orientalis (Funnel-web spider) protein is U8-agatoxin-Ao1a.